Here is a 402-residue protein sequence, read N- to C-terminus: Tryptophan synthase beta chain (402 aa).

K92 is subject to N6-(pyridoxal phosphate)lysine.

Belongs to the TrpB family. Tetramer of two alpha and two beta chains. Requires pyridoxal 5'-phosphate as cofactor.

The enzyme catalyses (1S,2R)-1-C-(indol-3-yl)glycerol 3-phosphate + L-serine = D-glyceraldehyde 3-phosphate + L-tryptophan + H2O. It participates in amino-acid biosynthesis; L-tryptophan biosynthesis; L-tryptophan from chorismate: step 5/5. Its function is as follows. The beta subunit is responsible for the synthesis of L-tryptophan from indole and L-serine. The chain is Tryptophan synthase beta chain from Staphylococcus epidermidis (strain ATCC 35984 / DSM 28319 / BCRC 17069 / CCUG 31568 / BM 3577 / RP62A).